A 1146-amino-acid polypeptide reads, in one-letter code: Inositol hexakisphosphate and diphosphoinositol-pentakisphosphate kinase (1146 aa).

A disordered region spans residues 1-33 (MSGIKKEPIESDEVPQQETKNNLPSAPSEMSPL). The segment covering 16–25 (QQETKNNLPS) has biased composition (polar residues). Residues Ser31, Ser54, and Ser77 each carry the phosphoserine modification. The interval 93–185 (TALGNGNNTN…STSHPKPRLP (93 aa)) is disordered. Positions 96–106 (GNGNNTNTVTT) are enriched in low complexity. Basic and acidic residues predominate over residues 110 to 120 (KKADSESKSEA). Residues 125–144 (LSNSNIVNDADNINSISKTG) are compositionally biased toward polar residues. Residues 164 to 178 (SVPTSSASSRKSSTS) are compositionally biased toward low complexity. 197-198 (AK) is a substrate binding site. Residues Arg278, Lys351, His358, Arg377, 402 to 405 (EQFM), and 412 to 414 (DVK) each bind ATP. 377 to 378 (RK) is a substrate binding site. Lys414 and Arg428 together coordinate substrate. Residues Ser430, Asp475, and 487-489 (DVN) contribute to the ATP site. 492–495 (SFVK) contributes to the substrate binding site. Residues 530 to 597 (REEKEQKWVF…VLQALRIALD (68 aa)) are polyphosphoinositide-binding domain. Residues Ser895 and Ser1107 each carry the phosphoserine modification. The disordered stretch occupies residues 1106-1146 (TSPNLSFQKRKTRRKSVSVEKLKRPASSGSSSSTSVNKTLD).

It belongs to the histidine acid phosphatase family. VIP1 subfamily.

The protein localises to the cytoplasm. It is found in the cytoskeleton. The catalysed reaction is 1D-myo-inositol hexakisphosphate + ATP = 1-diphospho-1D-myo-inositol 2,3,4,5,6-pentakisphosphate + ADP. It catalyses the reaction 5-diphospho-1D-myo-inositol 1,2,3,4,6-pentakisphosphate + ATP + H(+) = 1,5-bis(diphospho)-1D-myo-inositol 2,3,4,6-tetrakisphosphate + ADP. In terms of biological role, bifunctional inositol kinase that acts in concert with the IP6K kinases to synthesize the diphosphate group-containing inositol pyrophosphates diphosphoinositol pentakisphosphate, PP-InsP5, and bis-diphosphoinositol tetrakisphosphate, (PP)2-InsP4. Phosphorylates inositol hexakisphosphate (InsP6) at position 1 to produce PP-InsP5 which is in turn phosphorylated by IP6Ks to produce (PP)2-InsP4. Alternatively, phosphorylates PP-InsP5 at position 1, produced by IP6Ks from InsP6, to produce (PP)2-InsP4. Required for maintaining cellular integrity, normal growth and interactions with the ARP complex. Acts as a regulator of the PHO80-PHO85 cyclin/cyclin-dependent kinase (CDK) complex, thereby regulating signaling of phosphate availability. Required for the function of the cortical actin cytoskeleton, possibly by participating in correct F-actin localization and ensuring polarized growth. Regulates polarized growth and modulates interphase microtubule cytoskeleton. Regulates microtubule dynamics without the requirement of microtubule plus-end tracking protein Mal3. Required for growth zone selection. The protein is Inositol hexakisphosphate and diphosphoinositol-pentakisphosphate kinase of Saccharomyces cerevisiae (strain ATCC 204508 / S288c) (Baker's yeast).